Reading from the N-terminus, the 488-residue chain is Malonate-semialdehyde dehydrogenase (488 aa).

The NAD(+) site is built by alanine 150, phenylalanine 152, lysine 176, glutamate 179, arginine 180, serine 229, and threonine 251. Cysteine 284 (nucleophile) is an active-site residue. Glutamate 382 contributes to the NAD(+) binding site.

Belongs to the aldehyde dehydrogenase family. IolA subfamily. In terms of assembly, homotetramer.

The catalysed reaction is 3-oxopropanoate + NAD(+) + CoA + H2O = hydrogencarbonate + acetyl-CoA + NADH + H(+). It catalyses the reaction 2-methyl-3-oxopropanoate + NAD(+) + CoA + H2O = propanoyl-CoA + hydrogencarbonate + NADH + H(+). The protein operates within polyol metabolism; myo-inositol degradation into acetyl-CoA; acetyl-CoA from myo-inositol: step 7/7. Its function is as follows. Catalyzes the oxidation of malonate semialdehyde (MSA) and methylmalonate semialdehyde (MMSA) into acetyl-CoA and propanoyl-CoA, respectively. Is involved in a myo-inositol catabolic pathway. Bicarbonate, and not CO2, is the end-product of the enzymatic reaction. This is Malonate-semialdehyde dehydrogenase from Listeria monocytogenes serotype 4b (strain F2365).